The sequence spans 126 residues: Small ribosomal subunit protein uS12 (126 aa).

The interval 1 to 26 (MPTINQLVRKGRASETTKSKSPALQD) is disordered. The residue at position 89 (Asp-89) is a 3-methylthioaspartic acid. The disordered stretch occupies residues 103–126 (DTQGVKDRKQARSKYGAKRAKAGK). Positions 113 to 126 (ARSKYGAKRAKAGK) are enriched in basic residues.

The protein belongs to the universal ribosomal protein uS12 family. In terms of assembly, part of the 30S ribosomal subunit. Contacts proteins S8 and S17. May interact with IF1 in the 30S initiation complex.

Functionally, with S4 and S5 plays an important role in translational accuracy. In terms of biological role, interacts with and stabilizes bases of the 16S rRNA that are involved in tRNA selection in the A site and with the mRNA backbone. Located at the interface of the 30S and 50S subunits, it traverses the body of the 30S subunit contacting proteins on the other side and probably holding the rRNA structure together. The combined cluster of proteins S8, S12 and S17 appears to hold together the shoulder and platform of the 30S subunit. The polypeptide is Small ribosomal subunit protein uS12 (Paraburkholderia xenovorans (strain LB400)).